A 160-amino-acid chain; its full sequence is Lipoprotein signal peptidase (160 aa).

3 helical membrane passes run 13–33, 72–92, and 104–124; these read IYIT…RLII, WFLS…ITKL, and SLII…GFVV. Active-site residues include D125 and D143. The helical transmembrane segment at 134-154 threads the bilayer; the sequence is WHFATFNIADCSIFIGIIILM.

This sequence belongs to the peptidase A8 family.

The protein localises to the cell inner membrane. It carries out the reaction Release of signal peptides from bacterial membrane prolipoproteins. Hydrolyzes -Xaa-Yaa-Zaa-|-(S,diacylglyceryl)Cys-, in which Xaa is hydrophobic (preferably Leu), and Yaa (Ala or Ser) and Zaa (Gly or Ala) have small, neutral side chains.. Its pathway is protein modification; lipoprotein biosynthesis (signal peptide cleavage). In terms of biological role, this protein specifically catalyzes the removal of signal peptides from prolipoproteins. This Buchnera aphidicola subsp. Acyrthosiphon pisum (strain APS) (Acyrthosiphon pisum symbiotic bacterium) protein is Lipoprotein signal peptidase.